Here is a 251-residue protein sequence, read N- to C-terminus: UPF0309 protein SCO4393 (251 aa).

In terms of domain architecture, SIS spans 36-220; that stretch reads LADTVQNGGR…AATLADRGIE (185 aa).

The protein belongs to the UPF0309 family.

This chain is UPF0309 protein SCO4393, found in Streptomyces coelicolor (strain ATCC BAA-471 / A3(2) / M145).